Reading from the N-terminus, the 666-residue chain is TATA box-binding protein-associated factor RNA polymerase I subunit B (666 aa).

The RRN7-type zinc finger occupies 1 to 29 (MICTECENDAFDEEDDGYYYCQRCGVQVE). Cys3, Cys6, Cys21, and Cys24 together coordinate Zn(2+). The interval 30–64 (NLIQTGVDDGDLIGEGGGTQGALYNPKHRRTEPQP) is B-reader. 2 disordered regions span residues 45-110 (GGGT…VDKE) and 189-208 (DSEH…LKRH). Positions 65 to 80 (ITPSQPRFTDDTSRYS) are B-linker. Residues 78–89 (RYSQFKSQFESE) show a composition bias toward polar residues. The interval 81–285 (QFKSQFESEN…REQMGERSAA (205 aa)) is N-terminal cyclin fold. 2 stretches are compositionally biased toward basic and acidic residues: residues 90-110 (NGNK…VDKE) and 189-202 (DSEH…VKDA). The C-terminal cyclin fold stretch occupies residues 286-288 (CPV). Residues 515–548 (SDGNNPCSSSSRRNESVSIGLDLSSSEHRESSSP) are disordered. Over residues 539–548 (SSEHRESSSP) the composition is skewed to basic and acidic residues.

Belongs to the RRN7/TAF1B family. In terms of assembly, interacts with TFIIF. Interacts with MEE14/CBP1, TBP1 and NRPB1 (via CTD). As to expression, expressed at high levels in seedlings, inflorescences and young siliques and at lower levels in roots. Not detected in leaves and stems. Detected in root tips and shoot apical meristems, in anthers, primarily in microspores with weaker expression in mature pollen grains and in the central cell of the mature female gametophyte. Not expressed in synergids, egg cells, antipodal cells, endosperm cells and fertilized egg cells.

It is found in the nucleus. The protein localises to the nucleolus. Component of RNA polymerase I core factor complex that acts as a GTF2B/TFIIB-like factor and plays a key role in multiple steps during transcription initiation such as pre-initiation complex (PIC) assembly and postpolymerase recruitment events in polymerase I (Pol I) transcription. Binds rDNA promoters and plays a role in Pol I recruitment. Required for the development of the one-cell zygote and endosperm in embryos. Required for micropylar pollen tube guidance, but has no effect on ovule development and gametophytic cell fate specification. May regulate the transcription of secreted cysteine-rich peptide (CRP) genes in the embryo sac. This is TATA box-binding protein-associated factor RNA polymerase I subunit B from Arabidopsis thaliana (Mouse-ear cress).